Here is a 388-residue protein sequence, read N- to C-terminus: 3-amino-5-hydroxybenzoate synthase (388 aa).

Residue K188 is modified to N6-(pyridoxal phosphate)lysine.

This sequence belongs to the degT/dnrJ/eryC1 family. As to quaternary structure, homodimer. Can interact with RifL. Pyridoxal 5'-phosphate serves as cofactor.

It carries out the reaction 5-deoxy-5-amino-3-dehydroshikimate = 3-amino-5-hydroxybenzoate + H2O + H(+). The catalysed reaction is UDP-3-oxo-alpha-D-glucose + L-glutamine = UDP-alpha-D-kanosamine + 2-oxoglutaramate. Its pathway is antibiotic biosynthesis; rifamycin B biosynthesis. Its activity is regulated as follows. AHBA synthase activity is activated by 3-deoxy-D-arabinoheptulosonic acid 7-phosphate (DAHP), an intermediate in the shikimate pathway, and is irreversibly inhibited by gabaculine (5-amino-1,3-cyclohexadiene-1-carboxylate). Its function is as follows. Catalyzes the dehydration and aromatization of 5-amino-5-deoxy-3-dehydroshikimate (aminoDHS) to 3-amino-5-hydroxybenzoate (AHBA), a compound that then serves as the starter unit for the assembly of a polyketide during the biosynthesis of rifamycin B and other ansamycin antibiotics. Cannot utilize 5-deoxy-5-amino-3-dehydroquinate (aminoDHQ), 5-deoxy-5-aminoshikimate (aminoSA), quinate, 3-dehydroquinate, or 3-dehydroshikimate (DHS) as substrate. In a complex with RifL, RifK may have a second function in the AHBA pathway, acting as a transaminase introducing the nitrogen into the first pathway intermediate, UDP-3-keto-D-glucose, to give UDP-kanosamine. Appears to use glutamine as the nitrogen donor; NH(4)(+) or asparagine are 30% less effective as nitrogen donors and neither glutamate nor aspartate show activity. The chain is 3-amino-5-hydroxybenzoate synthase (rifK) from Amycolatopsis mediterranei (strain S699) (Nocardia mediterranei).